A 744-amino-acid polypeptide reads, in one-letter code: Cytosolic neutral trehalase (744 aa).

Positions 99, 101, 103, 105, and 110 each coordinate Ca(2+). Residues arginine 286, 293–294, asparagine 330, 339–341, glutamate 406, arginine 455, and glycine 458 contribute to the substrate site; these read WD and RSQ. Residues aspartate 460 and glutamate 665 each act as proton donor/acceptor in the active site.

Belongs to the glycosyl hydrolase 37 family. The cofactor is Ca(2+).

The protein resides in the cytoplasm. It catalyses the reaction alpha,alpha-trehalose + H2O = alpha-D-glucose + beta-D-glucose. It functions in the pathway carbohydrate degradation. Hydrolyzes intracellular trehalose to glucose. In Neurospora crassa (strain ATCC 24698 / 74-OR23-1A / CBS 708.71 / DSM 1257 / FGSC 987), this protein is Cytosolic neutral trehalase.